The chain runs to 361 residues: (S)-coclaurine N-methyltransferase (361 aa).

Residues Ser-101, Gly-139, Asn-163, Gln-167, Asp-189, Ile-190, and Val-205 each contribute to the S-adenosyl-L-methionine site. The active site involves Cys-336.

Belongs to the CFA/CMAS family. In terms of assembly, homodimer. As to expression, highly expressed in rhizomes. Detected in roots, petioles, flower buds and leaves. Expressed between the developing stele and ground tissues near the root apical meristem, in the immature endodermis, the pericycle and the spokes of developing xylem in the apical region of the root and in the protoderm of leaf primordia in rhizomes.

It localises to the cytoplasm. The catalysed reaction is norreticuline + S-adenosyl-L-methionine = reticuline + S-adenosyl-L-homocysteine + H(+). It carries out the reaction (S)-coclaurine + S-adenosyl-L-methionine = (S)-N-methylcoclaurine + S-adenosyl-L-homocysteine + H(+). The enzyme catalyses heliamine + S-adenosyl-L-methionine = N-methylheliamine + S-adenosyl-L-homocysteine + H(+). It participates in alkaloid biosynthesis. In terms of biological role, involved in the biosynthesis of protoberberine alkaloids. N-methyltransferase with a substrate preference for (R,S)-norreticuline but also active with dimethoxytetrahydroisoquinoline. This Thalictrum flavum subsp. glaucum (Yellow meadow rue) protein is (S)-coclaurine N-methyltransferase.